We begin with the raw amino-acid sequence, 187 residues long: Flavin prenyltransferase UbiX (187 aa).

FMN contacts are provided by residues 9–11, threonine 34, 88–91, and arginine 123; these read GSS and SISS. Residues tyrosine 153 and lysine 169 each contribute to the dimethylallyl phosphate site.

It belongs to the UbiX/PAD1 family.

It catalyses the reaction dimethylallyl phosphate + FMNH2 = prenylated FMNH2 + phosphate. Its function is as follows. Flavin prenyltransferase that catalyzes the synthesis of the prenylated FMN cofactor (prenyl-FMN) for 4-hydroxy-3-polyprenylbenzoic acid decarboxylase UbiD. The prenyltransferase is metal-independent and links a dimethylallyl moiety from dimethylallyl monophosphate (DMAP) to the flavin N5 and C6 atoms of FMN. The chain is Flavin prenyltransferase UbiX from Campylobacter jejuni subsp. jejuni serotype O:2 (strain ATCC 700819 / NCTC 11168).